The sequence spans 450 residues: Tryptophan dimethylallyltransferase 2 (450 aa).

Residues 80 to 81 and Glu89 each bind L-tryptophan; that span reads IL. Substrate contacts are provided by Arg100, Lys186, and Tyr188. L-tryptophan is bound by residues Tyr190 and Arg251. Substrate-binding residues include Arg264, Lys266, Tyr268, Gln350, Tyr352, Tyr416, and Tyr420.

The protein belongs to the tryptophan dimethylallyltransferase family. In terms of assembly, homodimer.

It catalyses the reaction L-tryptophan + dimethylallyl diphosphate = 4-(3-methylbut-2-enyl)-L-tryptophan + diphosphate. It participates in alkaloid biosynthesis; ergot alkaloid biosynthesis. Functionally, catalyzes the first step of ergot alkaloid biosynthesis. Ergot alkaloids, which are produced by endophyte fungi, can enhance plant host fitness, but also cause livestock toxicosis to host plants. The sequence is that of Tryptophan dimethylallyltransferase 2 (dmaW2) from Epichloe coenophiala (Tall fescue endophyte fungus).